The following is a 423-amino-acid chain: Protein CLP1 homolog (423 aa).

ATP-binding positions include Glu16, Lys57, and 119 to 124 (DVGKST).

The protein belongs to the Clp1 family. Clp1 subfamily.

Its subcellular location is the nucleus. Functionally, required for endonucleolytic cleavage during polyadenylation-dependent pre-mRNA 3'-end formation. The sequence is that of Protein CLP1 homolog (cbc) from Drosophila sechellia (Fruit fly).